The primary structure comprises 129 residues: Large ribosomal subunit protein bL12 (129 aa).

It belongs to the bacterial ribosomal protein bL12 family. In terms of assembly, homodimer. Part of the ribosomal stalk of the 50S ribosomal subunit. Forms a multimeric L10(L12)X complex, where L10 forms an elongated spine to which 2 to 4 L12 dimers bind in a sequential fashion. Binds GTP-bound translation factors.

Its function is as follows. Forms part of the ribosomal stalk which helps the ribosome interact with GTP-bound translation factors. Is thus essential for accurate translation. The polypeptide is Large ribosomal subunit protein bL12 (Maridesulfovibrio salexigens (strain ATCC 14822 / DSM 2638 / NCIMB 8403 / VKM B-1763) (Desulfovibrio salexigens)).